The chain runs to 120 residues: NAD(P)H-quinone oxidoreductase subunit 3, chloroplastic (120 aa).

The next 3 helical transmembrane spans lie at 14–34 (LIISSLIPILAFFISGILAPI), 64–84 (MFALVFVVFDVETVFLYPWAM), and 88–108 (ILGVSVFIEALIFVLILIVGL).

The protein belongs to the complex I subunit 3 family. NDH is composed of at least 16 different subunits, 5 of which are encoded in the nucleus.

It localises to the plastid. The protein localises to the chloroplast thylakoid membrane. It catalyses the reaction a plastoquinone + NADH + (n+1) H(+)(in) = a plastoquinol + NAD(+) + n H(+)(out). It carries out the reaction a plastoquinone + NADPH + (n+1) H(+)(in) = a plastoquinol + NADP(+) + n H(+)(out). Its function is as follows. NDH shuttles electrons from NAD(P)H:plastoquinone, via FMN and iron-sulfur (Fe-S) centers, to quinones in the photosynthetic chain and possibly in a chloroplast respiratory chain. The immediate electron acceptor for the enzyme in this species is believed to be plastoquinone. Couples the redox reaction to proton translocation, and thus conserves the redox energy in a proton gradient. In Coffea arabica (Arabian coffee), this protein is NAD(P)H-quinone oxidoreductase subunit 3, chloroplastic.